Consider the following 108-residue polypeptide: ATP synthase epsilon chain (108 aa).

It belongs to the ATPase epsilon chain family. As to quaternary structure, F-type ATPases have 2 components, CF(1) - the catalytic core - and CF(0) - the membrane proton channel. CF(1) has five subunits: alpha(3), beta(3), gamma(1), delta(1), epsilon(1). CF(0) has three main subunits: a, b and c.

It localises to the cell inner membrane. Its function is as follows. Produces ATP from ADP in the presence of a proton gradient across the membrane. The chain is ATP synthase epsilon chain from Thermotoga maritima (strain ATCC 43589 / DSM 3109 / JCM 10099 / NBRC 100826 / MSB8).